Reading from the N-terminus, the 396-residue chain is Large ribosomal subunit protein uL24m (396 aa).

Residues 374 to 396 (QLSLGGGQEDAATTTSPEQPKVV) are disordered. Over residues 384-396 (AATTTSPEQPKVV) the composition is skewed to polar residues.

The protein belongs to the universal ribosomal protein uL24 family. As to quaternary structure, component of the mitochondrial large ribosomal subunit (mt-LSU). Mature N.crassa 74S mitochondrial ribosomes consist of a small (37S) and a large (54S) subunit. The 37S small subunit contains a 16S ribosomal RNA (16S mt-rRNA) and 32 different proteins. The 54S large subunit contains a 23S rRNA (23S mt-rRNA) and 42 different proteins. uL24m forms the wall of the exit tunnel.

The protein localises to the mitochondrion. In terms of biological role, component of the mitochondrial ribosome (mitoribosome), a dedicated translation machinery responsible for the synthesis of mitochondrial genome-encoded proteins, including at least some of the essential transmembrane subunits of the mitochondrial respiratory chain. The mitoribosomes are attached to the mitochondrial inner membrane and translation products are cotranslationally integrated into the membrane. This chain is Large ribosomal subunit protein uL24m (mrpl40), found in Neurospora crassa (strain ATCC 24698 / 74-OR23-1A / CBS 708.71 / DSM 1257 / FGSC 987).